A 107-amino-acid polypeptide reads, in one-letter code: Iron-binding protein IscA (107 aa).

3 residues coordinate Fe cation: Cys35, Cys99, and Cys101.

It belongs to the HesB/IscA family. In terms of assembly, homodimer; may form tetramers and higher multimers. It depends on Fe cation as a cofactor.

Functionally, is able to transfer iron-sulfur clusters to apo-ferredoxin. Multiple cycles of [2Fe2S] cluster formation and transfer are observed, suggesting that IscA acts catalytically. Recruits intracellular free iron so as to provide iron for the assembly of transient iron-sulfur cluster in IscU in the presence of IscS, L-cysteine and the thioredoxin reductase system TrxA/TrxB. The polypeptide is Iron-binding protein IscA (Serratia proteamaculans (strain 568)).